A 280-amino-acid chain; its full sequence is Chlorophyll a-b binding protein CP26, chloroplastic (280 aa).

A chloroplast-targeting transit peptide spans 1–48 (MASLGVSEMLGTPLNFRAVSRSSAPLASSPSTFKTVALFSKKKPAPAK). Phenylalanine 70 provides a ligand contact to chlorophyll b. Tyrosine 95, glutamate 114, and histidine 117 together coordinate chlorophyll a. 2 helical membrane passes run 110-130 (YQAFELIHARWAMLGAAGFII) and 167-187 (IPINLVLAVVAEVVLLGGAEY). The chlorophyll b site is built by arginine 119, isoleucine 167, glutamate 186, and arginine 189. Chlorophyll a is bound by residues lysine 224, glutamate 225, asparagine 228, arginine 230, glutamine 242, and histidine 257. A helical transmembrane segment spans residues 231–251 (LAMFAMLGFFIQAYVTGEGPV).

It belongs to the light-harvesting chlorophyll a/b-binding (LHC) protein family. As to quaternary structure, forms heterotrimers with LHCB3. The LHC complex consists of chlorophyll a-b binding proteins. Binds at least 14 chlorophylls (8 Chl-a and 6 Chl-b) and carotenoids such as lutein and neoxanthin. serves as cofactor. Post-translationally, photoregulated by reversible phosphorylation of its threonine residues.

Its subcellular location is the plastid. The protein localises to the chloroplast thylakoid membrane. The light-harvesting complex (LHC) functions as a light receptor, it captures and delivers excitation energy to photosystems with which it is closely associated. The protein is Chlorophyll a-b binding protein CP26, chloroplastic (LHCB5) of Arabidopsis thaliana (Mouse-ear cress).